An 886-amino-acid polypeptide reads, in one-letter code: DNA mismatch repair protein MutS (886 aa).

An ATP-binding site is contributed by 641–648; sequence GPNMAGKS.

The protein belongs to the DNA mismatch repair MutS family.

In terms of biological role, this protein is involved in the repair of mismatches in DNA. It is possible that it carries out the mismatch recognition step. This protein has a weak ATPase activity. The protein is DNA mismatch repair protein MutS of Rickettsia rickettsii (strain Sheila Smith).